Here is a 583-residue protein sequence, read N- to C-terminus: Pentatricopeptide repeat-containing protein At2g33760 (583 aa).

PPR repeat units follow at residues 71–105, 106–140, 141–171, 172–206, 207–241, 242–276, 277–303, 309–339, and 345–379; these read DDFL…NVSP, SNYT…GFGL, DTYV…MPEK, SIVA…GFEP, DSAT…GLDL, NVKL…NVAA, WTAM…MEDD, NNVT…MTKS, and GVEH…GKAT. The tract at residues 383-458 is type E motif; that stretch reads LWTAMLGACK…QVGYSVIEVE (76 aa). A type E(+) motif region spans residues 459-489; sequence NKTYMFSMGDESHQETGEIYRYLETLISRCK. Residues 490-583 form a type DYW motif region; that stretch reads EIGYAPVSEE…NGSCSCLDYW (94 aa).

This sequence belongs to the PPR family. PCMP-H subfamily.

In Arabidopsis thaliana (Mouse-ear cress), this protein is Pentatricopeptide repeat-containing protein At2g33760 (PCMP-H6).